The sequence spans 305 residues: Phosphatidate cytidylyltransferase (305 aa).

8 consecutive transmembrane segments (helical) span residues Phe-27–Leu-47, Phe-67–Cys-87, Phe-96–Val-116, Leu-124–Ile-144, Ile-150–Leu-170, Thr-202–Ser-222, Ile-232–Gly-252, and Met-277–Ile-297.

This sequence belongs to the CDS family.

The protein localises to the cell membrane. The enzyme catalyses a 1,2-diacyl-sn-glycero-3-phosphate + CTP + H(+) = a CDP-1,2-diacyl-sn-glycerol + diphosphate. It participates in phospholipid metabolism; CDP-diacylglycerol biosynthesis; CDP-diacylglycerol from sn-glycerol 3-phosphate: step 3/3. The protein is Phosphatidate cytidylyltransferase (cdsA) of Chlamydia trachomatis serovar D (strain ATCC VR-885 / DSM 19411 / UW-3/Cx).